The following is a 438-amino-acid chain: Methylenetetrahydrofolate--tRNA-(uracil-5-)-methyltransferase TrmFO (438 aa).

An FAD-binding site is contributed by 9–14 (GGGLAG).

This sequence belongs to the MnmG family. TrmFO subfamily. FAD is required as a cofactor.

The protein localises to the cytoplasm. It carries out the reaction uridine(54) in tRNA + (6R)-5,10-methylene-5,6,7,8-tetrahydrofolate + NADH + H(+) = 5-methyluridine(54) in tRNA + (6S)-5,6,7,8-tetrahydrofolate + NAD(+). It catalyses the reaction uridine(54) in tRNA + (6R)-5,10-methylene-5,6,7,8-tetrahydrofolate + NADPH + H(+) = 5-methyluridine(54) in tRNA + (6S)-5,6,7,8-tetrahydrofolate + NADP(+). Its function is as follows. Catalyzes the folate-dependent formation of 5-methyl-uridine at position 54 (M-5-U54) in all tRNAs. The chain is Methylenetetrahydrofolate--tRNA-(uracil-5-)-methyltransferase TrmFO from Lactobacillus gasseri (strain ATCC 33323 / DSM 20243 / BCRC 14619 / CIP 102991 / JCM 1131 / KCTC 3163 / NCIMB 11718 / NCTC 13722 / AM63).